Here is a 372-residue protein sequence, read N- to C-terminus: NAD(P)H-quinone oxidoreductase subunit 1 (372 aa).

Transmembrane regions (helical) follow at residues 27–47 (IIWL…GVLV), 97–117 (ILFT…WLIV), 128–148 (VGIG…GLLM), 176–196 (LALS…IDIV), 204–224 (ILSW…ICAL), 266–286 (ILSA…PIPV), 308–328 (SIGI…AILL), and 347–367 (FLLP…LALP).

This sequence belongs to the complex I subunit 1 family. As to quaternary structure, NDH-1 is composed of at least 11 different subunits.

It localises to the cellular thylakoid membrane. The catalysed reaction is a plastoquinone + NADH + (n+1) H(+)(in) = a plastoquinol + NAD(+) + n H(+)(out). It catalyses the reaction a plastoquinone + NADPH + (n+1) H(+)(in) = a plastoquinol + NADP(+) + n H(+)(out). Functionally, NDH-1 shuttles electrons from an unknown electron donor, via FMN and iron-sulfur (Fe-S) centers, to quinones in the respiratory and/or the photosynthetic chain. The immediate electron acceptor for the enzyme in this species is believed to be plastoquinone. Couples the redox reaction to proton translocation, and thus conserves the redox energy in a proton gradient. In Prochlorococcus marinus (strain MIT 9515), this protein is NAD(P)H-quinone oxidoreductase subunit 1.